We begin with the raw amino-acid sequence, 231 residues long: MPSTPLANGGTPPMGGGERTTVTTSTVADDKPGVSMMEQLVPEITTHALSYLDYPSLCRLSMTNSLMRKAANDDNAWKALYHKDFTLEQDGITPVNGWKEYYATTRAIISVNTEFFTIIRDRALQAMARLWLNSDYVKCIHASGELFSGYNEVIQSWQLCFNWEQGFDFQVHTVRTRILTDMAWVTMKAYLNVDGGPFLITNVFEFHNGRWHMVHHHSSVMLIDDQQVVVH.

The segment at 1-24 (MPSTPLANGGTPPMGGGERTTVTT) is disordered. The F-box domain maps to 34 to 80 (VSMMEQLVPEITTHALSYLDYPSLCRLSMTNSLMRKAANDDNAWKAL).

Part of a SCF (ASK-cullin-F-box) protein ligase complex. Interacts with SKP1A/ASK1.

Its pathway is protein modification; protein ubiquitination. Component of SCF(ASK-cullin-F-box) E3 ubiquitin ligase complexes, which may mediate the ubiquitination and subsequent proteasomal degradation of target proteins. The protein is F-box protein SKIP8 (SKIP8) of Arabidopsis thaliana (Mouse-ear cress).